The primary structure comprises 458 residues: NADH-ubiquinone oxidoreductase chain 4 (458 aa).

12 helical membrane passes run 21-43, 58-78, 93-112, 116-138, 145-165, 196-216, 224-244, 257-277, 285-305, 309-329, 341-361, and 379-399; these read ASLWTNTTTYSLLIATISLQWLN, IDQISAPLLVLSCWLLPLMLL, RTFIVTLTTIQPFIILAFSA, TLFYISFEATLIPTLILITRWGN, AGIYLLFYTLISSLPLLVTIL, GLALLMAFMVKAPLYGLHLWL, PIAGSMLLAALLLKLGGYGIM, LSYPFLALALWGALMTSSICL, LIAYSSVSHMGLVIAASMIQT, FSGAMILMISHGLTSSMLFCL, ILLLTRGLQPLLPLMSVWWLL, and LTIMIALFNWSTPTIILTGLA.

This sequence belongs to the complex I subunit 4 family.

It is found in the mitochondrion membrane. The catalysed reaction is a ubiquinone + NADH + 5 H(+)(in) = a ubiquinol + NAD(+) + 4 H(+)(out). In terms of biological role, core subunit of the mitochondrial membrane respiratory chain NADH dehydrogenase (Complex I) that is believed to belong to the minimal assembly required for catalysis. Complex I functions in the transfer of electrons from NADH to the respiratory chain. The immediate electron acceptor for the enzyme is believed to be ubiquinone. This is NADH-ubiquinone oxidoreductase chain 4 (MT-ND4) from Struthio camelus (Common ostrich).